A 508-amino-acid polypeptide reads, in one-letter code: Pentatricopeptide repeat-containing protein At3g04130, mitochondrial (508 aa).

The transit peptide at 1 to 74 directs the protein to the mitochondrion; that stretch reads MSWLIQNRIG…DSEDDVFKRL (74 aa). PPR repeat units follow at residues 120–150, 154–188, 189–219, 223–257, 258–292, 293–327, 328–363, 364–398, 400–434, and 436–470; these read SSDA…MRGD, TLNT…GLEK, NTES…LKSH, NAHT…GFRP, CVIS…GSPP, NSIT…GCKP, DSLF…GVSI, NTST…NLCN, DVHT…HHLS, and DEST…DITP.

The protein belongs to the PPR family. P subfamily.

It is found in the mitochondrion. The protein is Pentatricopeptide repeat-containing protein At3g04130, mitochondrial of Arabidopsis thaliana (Mouse-ear cress).